We begin with the raw amino-acid sequence, 639 residues long: Zinc finger protein ZIC 5 (639 aa).

4 disordered regions span residues 113-171, 189-251, 323-355, and 379-409; these read PCGG…GHSR, HGAP…GHPH, PGPHLQHHAPPPAPPPPPAPAQHPHQHHPHLPG, and PDELAGLPPPPPPPPPPPPPPPAGGAKPCSK. Pro residues predominate over residues 124 to 150; the sequence is SAPPPPAPPLPPTPSPPPPPPPPPPPA. Composition is skewed to pro residues over residues 331 to 343 and 385 to 401; these read APPPAPPPPPAPA and LPPPPPPPPPPPPPPPA. The C2H2-type 1; atypical zinc finger occupies 434-461; it reads HVCFWEDCPREGKPFKAKYKLINHIRVH. 3 C2H2-type zinc fingers span residues 467–491, 497–521, and 527–551; these read FPCPFPGCGKVFARSENLKIHKRTH, FKCEFDGCDRKFANSSDRKKHSHVH, and YYCKIRGCDKSYTHPSSLRKHMKIH. The interval 548-568 is disordered; that stretch reads MKIHCKSPPPSPGPLGYSSVG. S554, S558, and S576 each carry phosphoserine. Residues 607–639 form a disordered region; sequence APSHLHTPSSNGTTSETEDEEIYGNPEVVRTIH. Residues 612 to 621 show a composition bias toward polar residues; that stretch reads HTPSSNGTTS.

It belongs to the GLI C2H2-type zinc-finger protein family.

The protein localises to the nucleus. In terms of biological role, essential for neural crest development, converting cells from an epidermal fate to a neural crest cell fate. Binds to DNA. In Homo sapiens (Human), this protein is Zinc finger protein ZIC 5 (ZIC5).